We begin with the raw amino-acid sequence, 206 residues long: Ras-related protein Rab-7b (206 aa).

15–22 lines the GTP pocket; the sequence is GDSGVGKT. 2 positions are modified to phosphoserine: Ser-17 and Ser-23. Phosphothreonine is present on residues Thr-34, Thr-40, and Thr-64. Residues 34-40 and 63-67 contribute to the GTP site; these read TQQYRAT and DTAGQ. Positions 37–45 match the Effector region motif; sequence YRATVGADF. Ser-72 bears the Phosphoserine mark. Tyr-78 and Tyr-88 each carry phosphotyrosine. Residues 125 to 128 and 157 to 158 each bind GTP; these read NKLD and AK. S-geranylgeranyl cysteine attachment occurs at residues Cys-205 and Cys-206.

It belongs to the small GTPase superfamily. Rab family. Post-translationally, glycosylated.

Its subcellular location is the cytoplasm. The protein localises to the cytoskeleton. In Paramecium octaurelia, this protein is Ras-related protein Rab-7b.